Reading from the N-terminus, the 152-residue chain is Superoxide dismutase [Cu-Zn] (152 aa).

3 residues coordinate Cu cation: His45, His47, and His62. An intrachain disulfide couples Cys56 to Cys145. The Zn(2+) site is built by His62, His70, His79, and Asp82. A Cu cation-binding site is contributed by His119.

The protein belongs to the Cu-Zn superoxide dismutase family. As to quaternary structure, homodimer. Requires Cu cation as cofactor. It depends on Zn(2+) as a cofactor.

It is found in the cytoplasm. The enzyme catalyses 2 superoxide + 2 H(+) = H2O2 + O2. Its function is as follows. Destroys radicals which are normally produced within the cells and which are toxic to biological systems. The chain is Superoxide dismutase [Cu-Zn] (SODCC) from Panax ginseng (Korean ginseng).